The chain runs to 125 residues: Small ribosomal subunit protein uS12 (125 aa).

Residues 1-26 form a disordered region; that stretch reads MPTINQLVRKSRKTVKAQSDSPALKN. At aspartate 89 the chain carries 3-methylthioaspartic acid.

It belongs to the universal ribosomal protein uS12 family. As to quaternary structure, part of the 30S ribosomal subunit. Contacts proteins S8 and S17. May interact with IF1 in the 30S initiation complex.

Functionally, with S4 and S5 plays an important role in translational accuracy. Interacts with and stabilizes bases of the 16S rRNA that are involved in tRNA selection in the A site and with the mRNA backbone. Located at the interface of the 30S and 50S subunits, it traverses the body of the 30S subunit contacting proteins on the other side and probably holding the rRNA structure together. The combined cluster of proteins S8, S12 and S17 appears to hold together the shoulder and platform of the 30S subunit. This chain is Small ribosomal subunit protein uS12, found in Clostridium tetani (strain Massachusetts / E88).